Here is a 457-residue protein sequence, read N- to C-terminus: Methylenetetrahydrofolate--tRNA-(uracil-5-)-methyltransferase TrmFO (457 aa).

12–17 (GGGLAG) contributes to the FAD binding site.

Belongs to the MnmG family. TrmFO subfamily. The cofactor is FAD.

It is found in the cytoplasm. The enzyme catalyses uridine(54) in tRNA + (6R)-5,10-methylene-5,6,7,8-tetrahydrofolate + NADH + H(+) = 5-methyluridine(54) in tRNA + (6S)-5,6,7,8-tetrahydrofolate + NAD(+). It catalyses the reaction uridine(54) in tRNA + (6R)-5,10-methylene-5,6,7,8-tetrahydrofolate + NADPH + H(+) = 5-methyluridine(54) in tRNA + (6S)-5,6,7,8-tetrahydrofolate + NADP(+). Functionally, catalyzes the folate-dependent formation of 5-methyl-uridine at position 54 (M-5-U54) in all tRNAs. The chain is Methylenetetrahydrofolate--tRNA-(uracil-5-)-methyltransferase TrmFO from Myxococcus xanthus (strain DK1622).